The following is a 69-amino-acid chain: U2-agatoxin-Ao1z (69 aa).

Residues 1 to 20 (MRAIISLLLISAMVFSMIEA) form the signal peptide. Residues 21–34 (VPVEEGLQLFEGER) constitute a propeptide that is removed on maturation. Disulfide bonds link Cys-37–Cys-53, Cys-44–Cys-58, and Cys-52–Cys-68.

This sequence belongs to the neurotoxin 01 (U2-agtx) family. In terms of tissue distribution, expressed by the venom gland.

The protein resides in the secreted. In terms of biological role, insect active toxin causing rapid but reversible paralysis in crickets. No activity shown in mammals. Does not show effect on mammalian voltage-gated calcium channels. This is U2-agatoxin-Ao1z from Agelena orientalis (Funnel-web spider).